A 635-amino-acid polypeptide reads, in one-letter code: Probable ethylene response sensor 2 (635 aa).

Helical transmembrane passes span 24 to 44 (ISDF…IYFV), 59 to 79 (FGAF…TFAI), and 94 to 114 (ATAV…PDLL). Residues cysteine 66 and histidine 70 each coordinate Cu cation. Positions 159–308 (DRHTILRTTL…VVADQVAVAL (150 aa)) constitute a GAF domain. The Histidine kinase domain maps to 351-589 (VMNHEMRTPM…MFFVKLGMPE (239 aa)). Histidine 354 bears the Phosphohistidine; by autocatalysis mark.

This sequence belongs to the ethylene receptor family. In terms of assembly, homodimer. Cu cation serves as cofactor.

The protein localises to the endoplasmic reticulum membrane. It carries out the reaction ATP + protein L-histidine = ADP + protein N-phospho-L-histidine.. Its function is as follows. Ethylene receptor related to bacterial two-component regulators. Acts as a negative regulator of ethylene signaling. May play a role in the regulation of flowering by up-regulating GI (GIGANTEA) and RCN1 and regulate starch accumulation by down-regulating the alpha-amylase AMY3D. The polypeptide is Probable ethylene response sensor 2 (ERS2) (Oryza sativa subsp. japonica (Rice)).